The chain runs to 567 residues: 2-isopropylmalate synthase (567 aa).

Residues 28–302 enclose the Pyruvate carboxyltransferase domain; it reads PQWCSVDLRD…NPELDFSDIN (275 aa). Residues Asp-37, His-241, His-243, and Asn-277 each contribute to the Mg(2+) site. The interval 435 to 567 is regulatory domain; it reads IRTPLQLNYH…DMDTQEEDIA (133 aa).

Belongs to the alpha-IPM synthase/homocitrate synthase family. LeuA type 2 subfamily. As to quaternary structure, homodimer. Mg(2+) serves as cofactor.

It is found in the cytoplasm. The enzyme catalyses 3-methyl-2-oxobutanoate + acetyl-CoA + H2O = (2S)-2-isopropylmalate + CoA + H(+). It participates in amino-acid biosynthesis; L-leucine biosynthesis; L-leucine from 3-methyl-2-oxobutanoate: step 1/4. Its function is as follows. Catalyzes the condensation of the acetyl group of acetyl-CoA with 3-methyl-2-oxobutanoate (2-ketoisovalerate) to form 3-carboxy-3-hydroxy-4-methylpentanoate (2-isopropylmalate). The protein is 2-isopropylmalate synthase of Acetoanaerobium sticklandii (strain ATCC 12662 / DSM 519 / JCM 1433 / CCUG 9281 / NCIMB 10654 / HF) (Clostridium sticklandii).